A 230-amino-acid polypeptide reads, in one-letter code: Modulator of macroautophagy TMEM150B (230 aa).

A topological domain (cytoplasmic) is located at residue Met-1. Residues 2–22 (WAWALLPICLTIWATAGIWIV) form a helical membrane-spanning segment. At 23–50 (YGMSVSNGSVNLTDGFPFISLCGTYPPQ) the chain is on the extracellular side. Asn-29 and Asn-33 each carry an N-linked (GlcNAc...) asparagine glycan. A helical transmembrane segment spans residues 51-71 (SCVFGQVLNVGAMLGVWISVI). Residues 72–83 (RFQQIRDYGCHS) are Cytoplasmic-facing. Residues 84-104 (VLNSVSLAMGLLCALGTSIVG) form a helical membrane-spanning segment. Residues 105–115 (NFQQSNQLETH) are Extracellular-facing. The helical transmembrane segment at 116 to 136 (LAGAFLAFVIGNIYFWMQTVL) threads the bilayer. At 137–150 (TYMVKPKHGGCYIG) the chain is on the cytoplasmic side. Residues 151–171 (PIRFCLSVACTALIVLMAVFL) form a helical membrane-spanning segment. Topologically, residues 172-183 (KLNMKSISAICE) are extracellular. The chain crosses the membrane as a helical span at residues 184–204 (WIVAMILFLLYGLFSVDFWHL). Residues 205 to 230 (DGHYFHVKKRTAIPNEVEVSTVTLNI) lie on the Cytoplasmic side of the membrane.

The protein belongs to the DRAM/TMEM150 family.

The protein resides in the cell membrane. The protein localises to the endosome membrane. Its subcellular location is the cytoplasmic vesicle. It is found in the autophagosome membrane. In terms of biological role, modulator of macroautophagy that causes accumulation of autophagosomes under basal conditions and enhances autophagic flux. Represses cell death and promotes long-term clonogenic survival of cells grown in the absence of glucose in a macroautophagy-independent manner. May have some role in extracellular matrix engulfment or growth factor receptor recycling, both of which can modulate cell survival. In Xenopus tropicalis (Western clawed frog), this protein is Modulator of macroautophagy TMEM150B.